We begin with the raw amino-acid sequence, 121 residues long: MTQQPYYETMYILRPDIPEEEVESHVTKYRDILTEAGAEVLDNQMRGKRRLAYPIAKHKEGIYVQLSHNGDGQQVGVIEKAMRLSEDVIRYLTVKQEGPLPAPRVAPGTEAPAEPEAAAPA.

The tract at residues Pro99–Ala121 is disordered. Low complexity predominate over residues Glu110–Ala121.

The protein belongs to the bacterial ribosomal protein bS6 family.

In terms of biological role, binds together with bS18 to 16S ribosomal RNA. The chain is Small ribosomal subunit protein bS6 from Synechococcus sp. (strain CC9311).